Consider the following 1389-residue polypeptide: CRISPR-associated endoribonuclease Cas13a (1389 aa).

An NTD region spans residues M1–R347. R219 serves as a coordination point for crRNA. Binds crRNA stretches follow at residues Y330–K342, K405–Y408, and Y432–K436. Residues E348 to T498 are helical-1. Catalysis depends on for pre-crRNA processing residues R438 and K441. K441 contacts crRNA. Positions K471–R475 are binds crRNA. K489 contacts crRNA. Residues T499–K636 are HEPN-like fold 1-I. A binds crRNA region spans residues T502–H509. Catalysis depends on for target ssRNA cleavage residues R597 and H602. The interval A637–K828 is helical-2. Residue Q759 participates in crRNA binding. Residues T829–N899 form an HEPN-like fold 1-II region. The segment at N853–R858 is binds crRNA. W865 contributes to the crRNA binding site. Coiled-coil stretches lie at residues T893–Q920, E968–I1046, and K1101–K1131. Residues L900–E1170 form a linker region. The HEPN-like fold 2 stretch occupies residues E1170–P1290. Active-site for target ssRNA cleavage residues include R1278 and H1283. Binds crRNA stretches follow at residues T1311 to S1316 and K1338 to K1339.

Belongs to the CRISPR-associated endoribonuclease Cas13a family. As to quaternary structure, monomer. Requires Mg(2+) as cofactor.

Its activity is regulated as follows. RNase activity on target is decreased by EDTA. Target RNA acts as an activator for non-specific ssRNA degradation. In terms of biological role, CRISPR (clustered regularly interspaced short palindromic repeat), is an adaptive immune system that provides protection against mobile genetic elements (viruses, transposable elements and conjugative plasmids). CRISPR clusters contain sequences complementary to antecedent mobile elements (spacers) and target invading nucleic acids. Unlike many single-component effectors, this CRISPR-Cas system targets RNA. CRISPR clusters are transcribed from pre-CRISPR RNA (crRNA) and processed into crRNA (optimally 28 nucleotides in this system) by this protein. This protein processes pre-crRNA at a 'non-typical' site 1 nucleotide upstream of the pre-crRNA stem-loop; it cleaves pre-crRNA from L.buccalis and L.wadei in a similar fashion, whereas the enzymes from the latter 2 bacteria cleave their own pre-crRNA 3 nt further upstream. When the appropriate target sequences are cloned into the CRISPR array, confers immunity to ssRNA(+) enterobacteria phage MS2. Cleaves linear target ssRNA in a crRNA-dependent fashion, preferentially before U residues; has no activity on partially dsRNA, ssDNA or dsDNA. RNA secondary structure surrounding the target influence the cleavage site and efficiency; unlike other CRISPR-Cas effectors Cas13a cleaves outside of the crRNA binding site. In the presence of a viable RNA target other RNAs are also degraded (called collateral RNA degradation), suggesting this type of CRISPR-Cas might also prevent viral spread by inducing programmed cell death or dormancy. This system has a 3' protospacer flanking site (PFS), it does not cleave when the 3' PFS is G (PFS is equivalent to PAM, the protospacer adjacent motif). Mutations of its active site residues results in an RNA-programmed RNA-binding protein. This is CRISPR-associated endoribonuclease Cas13a from Leptotrichia shahii (strain DSM 19757 / CCUG 47503 / CIP 107916 / JCM 16776 / LB37).